A 174-amino-acid polypeptide reads, in one-letter code: NADH-ubiquinone oxidoreductase chain 6 (174 aa).

6 helical membrane-spanning segments follow: residues 1–21, 24–44, 47–67, 86–106, 111–131, and 151–171; these read MTYALFLLSVILVMGFVGFSS, SPIYGGLVLIISGAVGCAVIL, GGGYMGLMVFLIYLGGMMVVF, VEVLVSVLVGLVMEVGLVLWV, GVVVVVNFNSVGSWMIYEGEG, and WLVVVTGWTLFVGVYVVIEIA.

The protein belongs to the complex I subunit 6 family. In terms of assembly, core subunit of respiratory chain NADH dehydrogenase (Complex I) which is composed of 45 different subunits.

The protein localises to the mitochondrion inner membrane. It carries out the reaction a ubiquinone + NADH + 5 H(+)(in) = a ubiquinol + NAD(+) + 4 H(+)(out). Its function is as follows. Core subunit of the mitochondrial membrane respiratory chain NADH dehydrogenase (Complex I) which catalyzes electron transfer from NADH through the respiratory chain, using ubiquinone as an electron acceptor. Essential for the catalytic activity and assembly of complex I. The polypeptide is NADH-ubiquinone oxidoreductase chain 6 (MT-ND6) (Pongo abelii (Sumatran orangutan)).